Reading from the N-terminus, the 221-residue chain is Iron-sulfur cluster repair protein YtfE (221 aa).

Belongs to the RIC family. YtfE subfamily. In terms of assembly, homodimer.

It localises to the cytoplasm. In terms of biological role, di-iron-containing protein involved in the repair of iron-sulfur clusters damaged by oxidative and nitrosative stress conditions. The chain is Iron-sulfur cluster repair protein YtfE from Yersinia pestis bv. Antiqua (strain Antiqua).